Consider the following 282-residue polypeptide: Lipoyl synthase (282 aa).

7 residues coordinate [4Fe-4S] cluster: Cys-37, Cys-42, Cys-48, Cys-63, Cys-67, Cys-70, and Ser-275. The 216-residue stretch at Trp-49–Arg-264 folds into the Radical SAM core domain.

Belongs to the radical SAM superfamily. Lipoyl synthase family. The cofactor is [4Fe-4S] cluster.

Its subcellular location is the cytoplasm. The catalysed reaction is [[Fe-S] cluster scaffold protein carrying a second [4Fe-4S](2+) cluster] + N(6)-octanoyl-L-lysyl-[protein] + 2 oxidized [2Fe-2S]-[ferredoxin] + 2 S-adenosyl-L-methionine + 4 H(+) = [[Fe-S] cluster scaffold protein] + N(6)-[(R)-dihydrolipoyl]-L-lysyl-[protein] + 4 Fe(3+) + 2 hydrogen sulfide + 2 5'-deoxyadenosine + 2 L-methionine + 2 reduced [2Fe-2S]-[ferredoxin]. It participates in protein modification; protein lipoylation via endogenous pathway; protein N(6)-(lipoyl)lysine from octanoyl-[acyl-carrier-protein]: step 2/2. Its function is as follows. Catalyzes the radical-mediated insertion of two sulfur atoms into the C-6 and C-8 positions of the octanoyl moiety bound to the lipoyl domains of lipoate-dependent enzymes, thereby converting the octanoylated domains into lipoylated derivatives. In Porphyromonas gingivalis (strain ATCC BAA-308 / W83), this protein is Lipoyl synthase.